Reading from the N-terminus, the 780-residue chain is Copper-exporting P-type ATPase (780 aa).

In terms of domain architecture, HMA spans Q2 to D67. Residues C13 and C16 each contribute to the Cu(+) site. 6 helical membrane passes run L89–L109, F114–W134, T153–H173, A185–L205, V348–G368, and V374–T394. D430 acts as the 4-aspartylphosphate intermediate in catalysis. The next 2 helical transmembrane spans lie at F680 to A698 and L704 to L722.

It belongs to the cation transport ATPase (P-type) (TC 3.A.3) family. Type IB subfamily.

The protein resides in the cell membrane. It catalyses the reaction Cu(+)(in) + ATP + H2O = Cu(+)(out) + ADP + phosphate + H(+). In terms of biological role, involved in copper export. The polypeptide is Copper-exporting P-type ATPase (ctpA) (Mycobacterium leprae (strain TN)).